Here is a 349-residue protein sequence, read N- to C-terminus: Interferon regulatory factor 2 (349 aa).

The segment at residues 5-113 (RMRMRPWLEE…NAFRVYRMLP (109 aa)) is a DNA-binding region (IRF tryptophan pentad repeat). Residues K75 and K78 each carry the N6-acetyllysine modification. K137 is covalently cross-linked (Glycyl lysine isopeptide (Lys-Gly) (interchain with G-Cter in SUMO); alternate). Residue K137 forms a Glycyl lysine isopeptide (Lys-Gly) (interchain with G-Cter in SUMO2); alternate linkage. A Glycyl lysine isopeptide (Lys-Gly) (interchain with G-Cter in SUMO) cross-link involves residue K166. Residue S225 is modified to Phosphoserine. The segment covering 230 to 239 (YAESETTDSV) has biased composition (polar residues). Positions 230-253 (YAESETTDSVASDEENAEGRPHWR) are disordered. K260 participates in a covalent cross-link: Glycyl lysine isopeptide (Lys-Gly) (interchain with G-Cter in SUMO2). K293 participates in a covalent cross-link: Glycyl lysine isopeptide (Lys-Gly) (interchain with G-Cter in SUMO). The tract at residues 303-349 (SSWPPFTDLPLPAPVTPTPSSSRPDRETRASVIKKTSDITQARVKSC) is disordered.

Belongs to the IRF family. As to quaternary structure, interacts with BRD7, IRF2BP1 and IRF2BP2. Interacts with CREBBP in growing cells; the interaction acetylates IRF2 and regulates IRF2-dependent H4 promoter activity. Post-translationally, acetylated by CBP/ p300 during cell-growth. Acetylation on Lys-75 is required for stimulation of H4 promoter activity. The major sites of sumoylation are Lys-137 and Lys-293. Sumoylation with SUMO1 increases its transcriptional repressor activity on IRF1 and diminishes its ability to activate ISRE and H4 promoter.

The protein resides in the nucleus. Its function is as follows. Specifically binds to the upstream regulatory region of type I IFN and IFN-inducible MHC class I genes (the interferon consensus sequence (ICS)) and represses those genes. Also acts as an activator for several genes including H4 and IL7. Constitutively binds to the ISRE promoter to activate IL7. Involved in cell cycle regulation through binding the site II (HiNF-M) promoter region of H4 and activating transcription during cell growth. Antagonizes IRF1 transcriptional activation. In Mus musculus (Mouse), this protein is Interferon regulatory factor 2 (Irf2).